The chain runs to 400 residues: Octopine dehydrogenase (400 aa).

Residues 10-13 (GGNG) and 35-38 (FADE) contribute to the NADH site. The pyruvate site is built by glutamine 118 and threonine 143. A substrate-binding site is contributed by glutamine 118. Cysteine 148 serves as a coordination point for NAD(+). Methionine 206 lines the L-arginine pocket. Position 212 (histidine 212) interacts with pyruvate. Histidine 212 is a catalytic residue. Arginine 324 serves as a coordination point for NAD(+).

The protein belongs to the lysopine/nopaline/octopine/opine/vitopine dehydrogenases family.

It catalyses the reaction D-octopine + NAD(+) + H2O = L-arginine + pyruvate + NADH + H(+). Catalyzes the reverse reaction of octopine dehydrogenation. Acts on L-arginine in preference to other substrates. In Mizuhopecten yessoensis (Japanese scallop), this protein is Octopine dehydrogenase.